The following is a 378-amino-acid chain: Queuine tRNA-ribosyltransferase (378 aa).

The active-site Proton acceptor is aspartate 91. Residues 91-95 (DSGGF), aspartate 145, glutamine 197, and glycine 224 each bind substrate. Aspartate 274 (nucleophile) is an active-site residue. The segment at 279 to 283 (TRLAR) is RNA binding; important for wobble base 34 recognition. Cysteine 312, cysteine 314, cysteine 317, and histidine 343 together coordinate Zn(2+).

This sequence belongs to the queuine tRNA-ribosyltransferase family. In terms of assembly, homodimer. Within each dimer, one monomer is responsible for RNA recognition and catalysis, while the other monomer binds to the replacement base PreQ1. The cofactor is Zn(2+).

It carries out the reaction 7-aminomethyl-7-carbaguanine + guanosine(34) in tRNA = 7-aminomethyl-7-carbaguanosine(34) in tRNA + guanine. It participates in tRNA modification; tRNA-queuosine biosynthesis. Catalyzes the base-exchange of a guanine (G) residue with the queuine precursor 7-aminomethyl-7-deazaguanine (PreQ1) at position 34 (anticodon wobble position) in tRNAs with GU(N) anticodons (tRNA-Asp, -Asn, -His and -Tyr). Catalysis occurs through a double-displacement mechanism. The nucleophile active site attacks the C1' of nucleotide 34 to detach the guanine base from the RNA, forming a covalent enzyme-RNA intermediate. The proton acceptor active site deprotonates the incoming PreQ1, allowing a nucleophilic attack on the C1' of the ribose to form the product. After dissociation, two additional enzymatic reactions on the tRNA convert PreQ1 to queuine (Q), resulting in the hypermodified nucleoside queuosine (7-(((4,5-cis-dihydroxy-2-cyclopenten-1-yl)amino)methyl)-7-deazaguanosine). This chain is Queuine tRNA-ribosyltransferase, found in Methylacidiphilum infernorum (isolate V4) (Methylokorus infernorum (strain V4)).